The sequence spans 151 residues: UPF0178 protein Suden_0449 (151 aa).

Belongs to the UPF0178 family.

This is UPF0178 protein Suden_0449 from Sulfurimonas denitrificans (strain ATCC 33889 / DSM 1251) (Thiomicrospira denitrificans (strain ATCC 33889 / DSM 1251)).